The primary structure comprises 353 residues: Farnesyl pyrophosphate synthase (353 aa).

Residues K57, R60, and Q96 each coordinate isopentenyl diphosphate. Residue K57 is modified to N6-(2-hydroxyisobutyryl)lysine; alternate. K57 is subject to N6-acetyllysine; alternate. Mg(2+)-binding residues include D103 and D107. Dimethylallyl diphosphate is bound at residue R112. R113 is an isopentenyl diphosphate binding site. 5 residues coordinate dimethylallyl diphosphate: K200, T201, Q240, K257, and K266.

Belongs to the FPP/GGPP synthase family. In terms of assembly, homodimer. Interacts with RSAD2. Interacts with bovine leukemia virus (BLV) protein G4. Requires Mg(2+) as cofactor.

The protein localises to the cytoplasm. It catalyses the reaction isopentenyl diphosphate + dimethylallyl diphosphate = (2E)-geranyl diphosphate + diphosphate. The enzyme catalyses isopentenyl diphosphate + (2E)-geranyl diphosphate = (2E,6E)-farnesyl diphosphate + diphosphate. The protein operates within isoprenoid biosynthesis; farnesyl diphosphate biosynthesis; farnesyl diphosphate from geranyl diphosphate and isopentenyl diphosphate: step 1/1. Its pathway is isoprenoid biosynthesis; geranyl diphosphate biosynthesis; geranyl diphosphate from dimethylallyl diphosphate and isopentenyl diphosphate: step 1/1. Inactivated by interferon-induced RSAD2. This inactivation may result of disruption of lipid rafts at the plasma membrane, and thus have an antiviral effect since many enveloped viruses need lipid rafts to bud efficiently out of the cell. Functionally, key enzyme in isoprenoid biosynthesis which catalyzes the formation of farnesyl diphosphate (FPP), a precursor for several classes of essential metabolites including sterols, dolichols, carotenoids, and ubiquinones. FPP also serves as substrate for protein farnesylation and geranylgeranylation. Catalyzes the sequential condensation of isopentenyl pyrophosphate with the allylic pyrophosphates, dimethylallyl pyrophosphate, and then with the resultant geranylpyrophosphate to the ultimate product farnesyl pyrophosphate. In Bos taurus (Bovine), this protein is Farnesyl pyrophosphate synthase (FDPS).